The sequence spans 61 residues: Photosystem II reaction center X protein (61 aa).

The chain crosses the membrane as a helical span at residues 26 to 46 (IGSFIAAALLIVIPATAFLIF).

Belongs to the PsbX family. Type 2 subfamily. As to quaternary structure, PSII consists of a core antenna complex that captures photons, and an electron transfer chain that converts photonic excitation into a charge separation. PSII forms dimeric complexes.

Its subcellular location is the cellular thylakoid membrane. In terms of biological role, involved in the binding and/or turnover of quinones at the Q(B) site of Photosystem II. This is Photosystem II reaction center X protein from Prochlorococcus marinus (strain MIT 9301).